Consider the following 202-residue polypeptide: MDAPFAKTPSNLLIAGVDEAGRGPLAGPVITAAVILNPEIIIEGLADSKKLSLKKREELYEKIITNCKAFAIARADVEEIDRLNIFRATLLAMQRAINQLSIQPDKVLIDGHCCPDLPYETQAIVQGDQNVPAISAASILAKVTRDREMLKYDAQYPDYGFAIHKGYGTKAHLAAIHRFGITPVHRKSFEPVRQLKLFIPEE.

The RNase H type-2 domain maps to 12–201 (LLIAGVDEAG…VRQLKLFIPE (190 aa)). A divalent metal cation-binding residues include D18, E19, and D110.

Belongs to the RNase HII family. Mn(2+) serves as cofactor. Mg(2+) is required as a cofactor.

It is found in the cytoplasm. The enzyme catalyses Endonucleolytic cleavage to 5'-phosphomonoester.. In terms of biological role, endonuclease that specifically degrades the RNA of RNA-DNA hybrids. This chain is Ribonuclease HII, found in Coxiella burnetii (strain CbuK_Q154) (Coxiella burnetii (strain Q154)).